Reading from the N-terminus, the 497-residue chain is Keratin, type II cytoskeletal 8 (497 aa).

A head region spans residues 2-108 (TSYQRTVTVR…DPRIGQVRLE (107 aa)). The segment at 109–149 (EKEQIKTLNNQFAGFIDKVRYLEQQNKLLETKWQLLQNQTT) is coil 1A. The 313-residue stretch at 109–421 (EKEQIKTLNN…KLLEGEESRL (313 aa)) folds into the IF rod domain. Residues 145–162 (QNQTTPSRSNLDSMFEAY) form a linker 1 region. The segment at 163–254 (ISNLRRQLDT…QIYDEEIREL (92 aa)) is coil 1B. The segment at 255–278 (QTQIQDTSVIVQMDNNRQLDLDNI) is linker 12. The interval 279-417 (IAEVRAQYED…ATYRKLLEGE (139 aa)) is coil 2. Residues 418-497 (ESRLASGIQA…VSERSNIVKE (80 aa)) are tail.

The protein belongs to the intermediate filament family. In terms of assembly, heterotetramer of two type I and two type II keratins. Keratin-8 associates with keratin-18. Expressed in skin.

Its subcellular location is the cytoplasm. The protein localises to the nucleus. It is found in the nucleoplasm. It localises to the nucleus matrix. Functionally, together with KRT19, helps to link the contractile apparatus to dystrophin at the costameres of striated muscle. In Protopterus aethiopicus (Marbled lungfish), this protein is Keratin, type II cytoskeletal 8.